Reading from the N-terminus, the 500-residue chain is Glycerol kinase (500 aa).

T14 is a binding site for ADP. 3 residues coordinate ATP: T14, T15, and S16. Sn-glycerol 3-phosphate is bound at residue T14. R18 serves as a coordination point for ADP. Residues R84, E85, and Y136 each coordinate sn-glycerol 3-phosphate. Residues R84, E85, and Y136 each coordinate glycerol. H232 bears the Phosphohistidine; by HPr mark. D246 is a sn-glycerol 3-phosphate binding site. Glycerol contacts are provided by D246 and Q247. The ADP site is built by T268 and G311. T268, G311, Q315, and G412 together coordinate ATP. ADP is bound by residues G412 and N416.

It belongs to the FGGY kinase family. In terms of assembly, homotetramer and homodimer (in equilibrium). In terms of processing, the phosphoenolpyruvate-dependent sugar phosphotransferase system (PTS), including enzyme I, and histidine-containing protein (HPr) are required for the phosphorylation, which leads to the activation of the enzyme.

It catalyses the reaction glycerol + ATP = sn-glycerol 3-phosphate + ADP + H(+). Its pathway is polyol metabolism; glycerol degradation via glycerol kinase pathway; sn-glycerol 3-phosphate from glycerol: step 1/1. Its activity is regulated as follows. Activated by phosphorylation and inhibited by fructose 1,6-bisphosphate (FBP). Key enzyme in the regulation of glycerol uptake and metabolism. Catalyzes the phosphorylation of glycerol to yield sn-glycerol 3-phosphate. This chain is Glycerol kinase, found in Streptococcus uberis (strain ATCC BAA-854 / 0140J).